The chain runs to 314 residues: MAYPTTNLTGLIGFAKAAKVTGGTGGKVVTVNSLADFKSAVSGSAKTIVVLGSSLKTSALTKVVFGSNKTIVGSFGGANVLTNIHLRAESNSSNVIFQNLVFKHDVAIKDNDDIQLYLNYGKGYWVDHCSWPGHTWSDNDGSLDKLIYIGEKADYITISNCLFSNHKYGCIFGHPADDNNSAYNGYPRLTICHNYYENIQVRAPGLMRYGYFHVFNNYVNKFQLAFTVAQNANVISERNVFGSGAEKKGMVDDKGNGSTFTDNGSSPAAVASKSPAAKWTASSNYSYSLMTTAAAQSWVVSNAGAQNSALKFPS.

Arg-202 is a catalytic residue.

This sequence belongs to the polysaccharide lyase 1 family.

The enzyme catalyses Eliminative cleavage of (1-&gt;4)-alpha-D-galacturonan methyl ester to give oligosaccharides with 4-deoxy-6-O-methyl-alpha-D-galact-4-enuronosyl groups at their non-reducing ends.. This is Pectin lyase (pnl) from Pectobacterium carotovorum (Erwinia carotovora).